Consider the following 213-residue polypeptide: N-(5'-phosphoribosyl)anthranilate isomerase (213 aa).

This sequence belongs to the TrpF family.

The enzyme catalyses N-(5-phospho-beta-D-ribosyl)anthranilate = 1-(2-carboxyphenylamino)-1-deoxy-D-ribulose 5-phosphate. Its pathway is amino-acid biosynthesis; L-tryptophan biosynthesis; L-tryptophan from chorismate: step 3/5. The protein is N-(5'-phosphoribosyl)anthranilate isomerase of Rhodopseudomonas palustris (strain ATCC BAA-98 / CGA009).